The following is a 255-amino-acid chain: 3-alpha-(or 20-beta)-hydroxysteroid dehydrogenase (255 aa).

10–34 contacts NAD(+); sequence IITGGARGLGAEAARQAVAAGARVV. S139 contributes to the substrate binding site. The Proton acceptor role is filled by Y152.

The protein belongs to the short-chain dehydrogenases/reductases (SDR) family. In terms of assembly, homotetramer.

The catalysed reaction is androstan-3alpha,17beta-diol + NAD(+) = 17beta-hydroxyandrostanone + NADH + H(+). The protein operates within lipid metabolism; C21-steroid hormone metabolism. The sequence is that of 3-alpha-(or 20-beta)-hydroxysteroid dehydrogenase from Streptomyces exfoliatus (Streptomyces hydrogenans).